Here is a 332-residue protein sequence, read N- to C-terminus: MNADHAPFRHYLDLADARLGSQVVAVSDEWFAPASRMLQAGEPVWKEGVFDDSGKWMDGWETRRKRFEGHDQAVIRLGVSGVLKGVDIDTRFFTGNHPPAASLDGCFCAEGDPDDGTSWSEVLPSVELQGDRHHYHAIDDERPWTHLRLNIYPDGGIARLRVYGVPYRDWRSQTPGTALDLAAAINGGRALACSDQHFGPMVNLLKPGRALNMGDGWETGRRRTPGHDWAIIALGHPGSIEAAVVDTLHFKGNYPESCSIQAAFVEDGNEARIEAQSLFWRELLPAQKLEMHHEHRFERQLNALGPVSHVRLNIFPDGGVSRLRLFGRPQLP.

This sequence belongs to the allantoicase family.

It catalyses the reaction allantoate + H2O = (S)-ureidoglycolate + urea. The protein operates within nitrogen metabolism; (S)-allantoin degradation; (S)-ureidoglycolate from allantoate (aminidohydrolase route): step 1/1. The sequence is that of Probable allantoicase from Pseudomonas paraeruginosa (strain DSM 24068 / PA7) (Pseudomonas aeruginosa (strain PA7)).